A 552-amino-acid chain; its full sequence is MEKVQQTIRAPRGTELQTKGWVQEAALRMLMNNLDPEVAEKPEELVVYGGIGRAARNWESYQAIVDSLKTLESDETLLVQSGKPVAIFKSHEDAPRVLLANSNLVPKWANWDHFRELEKKGLMMYGQMTAGSWIYIGTQGILQGTYETFGEAARQHFDGSLKGTLTLTAGLGGMGGAQPLAVTMNGGVVIAIDVDKRSIDRRIEKRYCDMYTESLEEALTVANEYKEKREPISIGLLGNAAEILPELVKRNITPDLVTDQTSAHDPLNGYIPVGYTLEEAAKLREEDPERYVQLSKESMTKHVEAMLAMQEKGAITFDYGNNIRQVAFDEGLKNAFDFPGFVPAFIRPLFCEGKGPFRWVALSGDPEDIYKTDEVILREFADNEHLCNWIRMARQQVEFQGLPSRICWLGYGERAKFGRIINEMVANGELSAPIVIGRDHLDCGSVASPNRETEAMKDGSDAVADWPILNALINSVNGASWVSVHHGGGVGMGYSLHAGMVIVADGTEAAAKRIERVLTSDPGMGVVRHVDAGYDLAVETAKEKGVNIPMMK.

NAD(+)-binding positions include 49-50 (GG), Gln127, 173-175 (GMG), Asp193, 239-240 (NA), 260-264 (QTSAH), 270-271 (YI), and Tyr319. Residue Cys407 is part of the active site. Gly489 provides a ligand contact to NAD(+).

The protein belongs to the urocanase family. The cofactor is NAD(+).

Its subcellular location is the cytoplasm. It carries out the reaction 4-imidazolone-5-propanoate = trans-urocanate + H2O. It participates in amino-acid degradation; L-histidine degradation into L-glutamate; N-formimidoyl-L-glutamate from L-histidine: step 2/3. Its function is as follows. Catalyzes the conversion of urocanate to 4-imidazolone-5-propionate. This Bacillus cereus (strain ATCC 14579 / DSM 31 / CCUG 7414 / JCM 2152 / NBRC 15305 / NCIMB 9373 / NCTC 2599 / NRRL B-3711) protein is Urocanate hydratase.